The sequence spans 968 residues: RNA polymerase-associated protein RapA (968 aa).

The Helicase ATP-binding domain maps to 164–334 (DVGRRHAPRV…FARLRLLDPN (171 aa)). 177–184 (DEVGLGKT) is a binding site for ATP. The DEAH box motif lies at 280-283 (DEAH). Residues 490-644 (RVEWLMGYLT…TCPTGRTVYD (155 aa)) form the Helicase C-terminal domain.

The protein belongs to the SNF2/RAD54 helicase family. RapA subfamily. As to quaternary structure, interacts with the RNAP. Has a higher affinity for the core RNAP than for the holoenzyme. Its ATPase activity is stimulated by binding to RNAP.

Functionally, transcription regulator that activates transcription by stimulating RNA polymerase (RNAP) recycling in case of stress conditions such as supercoiled DNA or high salt concentrations. Probably acts by releasing the RNAP, when it is trapped or immobilized on tightly supercoiled DNA. Does not activate transcription on linear DNA. Probably not involved in DNA repair. This is RNA polymerase-associated protein RapA from Klebsiella pneumoniae (strain 342).